A 60-amino-acid polypeptide reads, in one-letter code: Potassium channel toxin alpha-KTx 15.9 (60 aa).

The signal sequence occupies residues 1–22 (MKIFLPVLVMLILCSMCLLTEG). Disulfide bonds link C30–C51, C36–C56, and C40–C58.

It belongs to the short scorpion toxin superfamily. Potassium channel inhibitor family. Alpha-KTx 15 subfamily. As to expression, expressed by the venom gland.

It is found in the secreted. Its function is as follows. Blocker of A-type voltage-gated potassium channels of cerebellar granular cells. May also inhibit Kv4/KCND when coexpressed with DPP6 or DPP10. The occlusion of the outer entry of the K(+) conducting pore is partially reversible and affects both open and closed channels. It shares the same target in rat brain than BmTX3 (AC Q8I0L5) and AmmTX3 (AC P60208). Has been shown to weakly inhibit TRPV1 channels. The polypeptide is Potassium channel toxin alpha-KTx 15.9 (Lychas mucronatus (Chinese swimming scorpion)).